A 215-amino-acid polypeptide reads, in one-letter code: Pyrrolidone-carboxylate peptidase (215 aa).

Catalysis depends on residues Glu78, Cys141, and His165.

This sequence belongs to the peptidase C15 family. In terms of assembly, homotetramer.

The protein localises to the cytoplasm. The catalysed reaction is Release of an N-terminal pyroglutamyl group from a polypeptide, the second amino acid generally not being Pro.. Functionally, removes 5-oxoproline from various penultimate amino acid residues except L-proline. The polypeptide is Pyrrolidone-carboxylate peptidase (Streptococcus pyogenes serotype M12 (strain MGAS2096)).